The primary structure comprises 274 residues: 1D-myo-inositol 2-acetamido-2-deoxy-alpha-D-glucopyranoside deacetylase 2 (274 aa).

His6, Asp9, and His140 together coordinate Zn(2+).

This sequence belongs to the MshB deacetylase family. Zn(2+) serves as cofactor.

The catalysed reaction is 1D-myo-inositol 2-acetamido-2-deoxy-alpha-D-glucopyranoside + H2O = 1D-myo-inositol 2-amino-2-deoxy-alpha-D-glucopyranoside + acetate. In terms of biological role, catalyzes the deacetylation of 1D-myo-inositol 2-acetamido-2-deoxy-alpha-D-glucopyranoside (GlcNAc-Ins) in the mycothiol biosynthesis pathway. The polypeptide is 1D-myo-inositol 2-acetamido-2-deoxy-alpha-D-glucopyranoside deacetylase 2 (Saccharopolyspora erythraea (strain ATCC 11635 / DSM 40517 / JCM 4748 / NBRC 13426 / NCIMB 8594 / NRRL 2338)).